The primary structure comprises 57 residues: Large ribosomal subunit protein bL33 (57 aa).

It belongs to the bacterial ribosomal protein bL33 family.

This chain is Large ribosomal subunit protein bL33, found in Shewanella sp. (strain W3-18-1).